The following is a 246-amino-acid chain: 2,3-bisphosphoglycerate-dependent phosphoglycerate mutase (246 aa).

Substrate is bound by residues 8–15, 21–22, R60, 87–90, K98, 114–115, and 183–184; these read RHGQSQWN, TG, EKHY, RR, and GN. The active-site Tele-phosphohistidine intermediate is the H9. E87 serves as the catalytic Proton donor/acceptor.

The protein belongs to the phosphoglycerate mutase family. BPG-dependent PGAM subfamily. Homodimer.

It carries out the reaction (2R)-2-phosphoglycerate = (2R)-3-phosphoglycerate. Its pathway is carbohydrate degradation; glycolysis; pyruvate from D-glyceraldehyde 3-phosphate: step 3/5. In terms of biological role, catalyzes the interconversion of 2-phosphoglycerate and 3-phosphoglycerate. The protein is 2,3-bisphosphoglycerate-dependent phosphoglycerate mutase of Dichelobacter nodosus (strain VCS1703A).